Consider the following 116-residue polypeptide: T cell receptor alpha variable 38-1 (116 aa).

The first 21 residues, 1–21, serve as a signal peptide directing secretion; it reads MTRVSLLWAVVVSTCLESGMA. Residues 22–116 form the Ig-like domain; that stretch reads QTVTQSQPEM…TAMYFCAFMK (95 aa). Cysteines 43 and 112 form a disulfide. The N-linked (GlcNAc...) asparagine glycan is linked to N78.

In terms of assembly, alpha-beta TR is a heterodimer composed of an alpha and beta chain; disulfide-linked. The alpha-beta TR is associated with the transmembrane signaling CD3 coreceptor proteins to form the TR-CD3 (TcR or TCR). The assembly of alpha-beta TR heterodimers with CD3 occurs in the endoplasmic reticulum where a single alpha-beta TR heterodimer associates with one CD3D-CD3E heterodimer, one CD3G-CD3E heterodimer and one CD247 homodimer forming a stable octameric structure. CD3D-CD3E and CD3G-CD3E heterodimers preferentially associate with TR alpha and TR beta chains, respectively. The association of the CD247 homodimer is the last step of TcR assembly in the endoplasmic reticulum and is required for transport to the cell surface.

The protein localises to the cell membrane. Its function is as follows. V region of the variable domain of T cell receptor (TR) alpha chain that participates in the antigen recognition. Alpha-beta T cell receptors are antigen specific receptors which are essential to the immune response and are present on the cell surface of T lymphocytes. Recognize peptide-major histocompatibility (MH) (pMH) complexes that are displayed by antigen presenting cells (APC), a prerequisite for efficient T cell adaptive immunity against pathogens. Binding of alpha-beta TR to pMH complex initiates TR-CD3 clustering on the cell surface and intracellular activation of LCK that phosphorylates the ITAM motifs of CD3G, CD3D, CD3E and CD247 enabling the recruitment of ZAP70. In turn ZAP70 phosphorylates LAT, which recruits numerous signaling molecules to form the LAT signalosome. The LAT signalosome propagates signal branching to three major signaling pathways, the calcium, the mitogen-activated protein kinase (MAPK) kinase and the nuclear factor NF-kappa-B (NF-kB) pathways, leading to the mobilization of transcription factors that are critical for gene expression and essential for T cell growth and differentiation. The T cell repertoire is generated in the thymus, by V-(D)-J rearrangement. This repertoire is then shaped by intrathymic selection events to generate a peripheral T cell pool of self-MH restricted, non-autoaggressive T cells. Post-thymic interaction of alpha-beta TR with the pMH complexes shapes TR structural and functional avidity. The chain is T cell receptor alpha variable 38-1 from Homo sapiens (Human).